Consider the following 151-residue polypeptide: UPF0208 membrane protein YPTB2595 (151 aa).

2 helical membrane-spanning segments follow: residues 46–66 (FGIR…IALG) and 69–89 (LGPA…GLWW).

Belongs to the UPF0208 family.

It is found in the cell inner membrane. This chain is UPF0208 membrane protein YPTB2595, found in Yersinia pseudotuberculosis serotype I (strain IP32953).